The chain runs to 357 residues: Protein-glutamate methylesterase/protein-glutamine glutaminase (357 aa).

The region spanning arginine 3–methionine 120 is the Response regulatory domain. Position 54 is a 4-aspartylphosphate (aspartate 54). The CheB-type methylesterase domain occupies phenylalanine 161 to glutamate 355. Catalysis depends on residues serine 173, histidine 200, and aspartate 296.

Belongs to the CheB family. Phosphorylated by CheA. Phosphorylation of the N-terminal regulatory domain activates the methylesterase activity.

It localises to the cytoplasm. It carries out the reaction [protein]-L-glutamate 5-O-methyl ester + H2O = L-glutamyl-[protein] + methanol + H(+). The catalysed reaction is L-glutaminyl-[protein] + H2O = L-glutamyl-[protein] + NH4(+). Functionally, involved in chemotaxis. Part of a chemotaxis signal transduction system that modulates chemotaxis in response to various stimuli. Catalyzes the demethylation of specific methylglutamate residues introduced into the chemoreceptors (methyl-accepting chemotaxis proteins or MCP) by CheR. Also mediates the irreversible deamidation of specific glutamine residues to glutamic acid. In Bacillus licheniformis (strain ATCC 14580 / DSM 13 / JCM 2505 / CCUG 7422 / NBRC 12200 / NCIMB 9375 / NCTC 10341 / NRRL NRS-1264 / Gibson 46), this protein is Protein-glutamate methylesterase/protein-glutamine glutaminase.